Reading from the N-terminus, the 437-residue chain is MDGNDNVTLLFAPLLRDNYTLAPNASSLGPGTDLALAPASSAGPGPGLSLGPGPSFGFSPGPTPTPEPTTSGLAGGAASHGPSPFPRPWAPHALPFWDTPLNHGLNVFVGAALCITMLGLGCTVDVNHFGAHVRRPVGALLAALCQFGLLPLLAFLLALAFKLDEVAAVAVLLCGCCPGGNLSNLMSLLVDGDMNLSIIMTISSTLLALVLMPLCLWIYSWAWINTPIVQLLPLGTVTLTLCSTLIPIGLGVFIRYKYSRVADYIVKVSLWSLLVTLVVLFIMTGTMLGPELLASIPAAVYVIAIFMPLAGYASGYGLATLFHLPPNCKRTVCLETGSQNVQLCTAILKLAFPPQFIGSMYMFPLLYALFQSAEAGIFVLIYKMYGSEMLHKRDPLDEDEDTDISYKKLKEEEMADTSYGTVKAENIIMMETAQTSL.

The Extracellular segment spans residues 1 to 103; the sequence is MDGNDNVTLL…LPFWDTPLNH (103 aa). N-linked (GlcNAc...) asparagine glycans are attached at residues Asn6, Asn18, and Asn24. Residues 37 to 82 form a disordered region; the sequence is APASSAGPGPGLSLGPGPSFGFSPGPTPTPEPTTSGLAGGAASHGP. Residues 51-60 are compositionally biased toward low complexity; the sequence is GPGPSFGFSP. Residues 104–124 form a helical membrane-spanning segment; sequence GLNVFVGAALCITMLGLGCTV. Residues 125–140 lie on the Cytoplasmic side of the membrane; the sequence is DVNHFGAHVRRPVGAL. The chain crosses the membrane as a helical span at residues 141–161; that stretch reads LAALCQFGLLPLLAFLLALAF. Residues 162-197 are Extracellular-facing; it reads KLDEVAAVAVLLCGCCPGGNLSNLMSLLVDGDMNLS. Asn181 and Asn195 each carry an N-linked (GlcNAc...) asparagine glycan. The chain crosses the membrane as a helical span at residues 198–218; it reads IIMTISSTLLALVLMPLCLWI. At 219–233 the chain is on the cytoplasmic side; sequence YSWAWINTPIVQLLP. A helical transmembrane segment spans residues 234 to 254; that stretch reads LGTVTLTLCSTLIPIGLGVFI. At 255–267 the chain is on the extracellular side; it reads RYKYSRVADYIVK. A helical transmembrane segment spans residues 268 to 288; that stretch reads VSLWSLLVTLVVLFIMTGTML. Residues 289–291 are Cytoplasmic-facing; that stretch reads GPE. A helical membrane pass occupies residues 292 to 312; it reads LLASIPAAVYVIAIFMPLAGY. At 313-360 the chain is on the extracellular side; it reads ASGYGLATLFHLPPNCKRTVCLETGSQNVQLCTAILKLAFPPQFIGSM. Residues 361–381 form a helical membrane-spanning segment; that stretch reads YMFPLLYALFQSAEAGIFVLI. The Cytoplasmic segment spans residues 382–437; sequence YKMYGSEMLHKRDPLDEDEDTDISYKKLKEEEMADTSYGTVKAENIIMMETAQTSL.

It belongs to the bile acid:sodium symporter (BASS) (TC 2.A.28) family. In terms of processing, activated following N-terminal proteolytic cleavage by thrombin and/or proteases. As to expression, highly expressed in brain and small intestine, and moderately expressed in colon, heart, prostate, and testis. Very low levels were detected in kidney, liver, ovary, placenta, spleen, and thymus.

The protein localises to the cell membrane. Its function is as follows. Transporter for bile acids. This is Sodium/bile acid cotransporter 4 (SLC10A4) from Homo sapiens (Human).